The sequence spans 233 residues: Guanylate kinase (233 aa).

In terms of domain architecture, Guanylate kinase-like spans 3 to 184; sequence GTIFIISAPS…AVEQLRAIVL (182 aa). 10-17 contributes to the ATP binding site; sequence APSGSGKS.

It belongs to the guanylate kinase family.

It localises to the cytoplasm. The catalysed reaction is GMP + ATP = GDP + ADP. Functionally, essential for recycling GMP and indirectly, cGMP. The sequence is that of Guanylate kinase from Koribacter versatilis (strain Ellin345).